Here is a 33-residue protein sequence, read N- to C-terminus: Gastrin (33 aa).

Gln1 is subject to Pyrrolidone carboxylic acid. Phenylalanine amide is present on Phe33.

This sequence belongs to the gastrin/cholecystokinin family.

Its subcellular location is the secreted. Its function is as follows. Gastrin stimulates the stomach mucosa to produce and secrete hydrochloric acid and the pancreas to secrete its digestive enzymes. It also stimulates smooth muscle contraction and increases blood circulation and water secretion in the stomach and intestine. The chain is Gastrin (GAST) from Cavia porcellus (Guinea pig).